The primary structure comprises 524 residues: Thioredoxin reductase 2, mitochondrial (524 aa).

Residues 1 to 36 constitute a mitochondrion transit peptide; that stretch reads MAAMAVALRGLGGRFRWRTQAVAGGVRGAARGAAAG. An FAD-binding site is contributed by 41–70; it reads DLLVVGGGSGGLACAKEAAQLGRKVAVVDY. The cysteines at positions 86 and 91 are disulfide-linked. 2 positions are modified to N6-succinyllysine: lysine 175 and lysine 329. The active-site Proton acceptor is the histidine 497. Positions 522–523 form a cross-link, cysteinyl-selenocysteine (Cys-Sec); the sequence is CU. Residue selenocysteine 523 is a non-standard amino acid, selenocysteine.

It belongs to the class-I pyridine nucleotide-disulfide oxidoreductase family. In terms of assembly, homodimer. FAD serves as cofactor. In terms of tissue distribution, highly expressed in the prostate, ovary, liver, testis, uterus, colon and small intestine. Intermediate levels in brain, skeletal muscle, heart and spleen. Low levels in placenta, pancreas, thymus and peripheral blood leukocytes. According to PubMed:10608886, high levels in kidney, whereas according to PubMed:9923614, levels are low. High expression is observed in the adrenal cortex.

The protein resides in the mitochondrion. The enzyme catalyses [thioredoxin]-dithiol + NADP(+) = [thioredoxin]-disulfide + NADPH + H(+). In terms of biological role, involved in the control of reactive oxygen species levels and the regulation of mitochondrial redox homeostasis. Maintains thioredoxin in a reduced state. May play a role in redox-regulated cell signaling. In Homo sapiens (Human), this protein is Thioredoxin reductase 2, mitochondrial.